The chain runs to 137 residues: UPF0768 protein C1952.04c (137 aa).

Basic and acidic residues predominate over residues 79–93; the sequence is QRRRREDLPTPERPE. Positions 79–137 are disordered; the sequence is QRRRREDLPTPERPEASAQQHAFFPGSSSQQTDIPNVRPQPHIPPPRKSDEAPPPYSYK. Pro residues predominate over residues 119-137; the sequence is PHIPPPRKSDEAPPPYSYK.

The protein belongs to the UPF0768 family.

In Schizosaccharomyces pombe (strain 972 / ATCC 24843) (Fission yeast), this protein is UPF0768 protein C1952.04c.